A 92-amino-acid polypeptide reads, in one-letter code: DNA-directed RNA polymerase subunit Rpo11 (92 aa).

This sequence belongs to the archaeal Rpo11/eukaryotic RPB11/RPC19 RNA polymerase subunit family. Part of the RNA polymerase complex.

Its subcellular location is the cytoplasm. The enzyme catalyses RNA(n) + a ribonucleoside 5'-triphosphate = RNA(n+1) + diphosphate. DNA-dependent RNA polymerase (RNAP) catalyzes the transcription of DNA into RNA using the four ribonucleoside triphosphates as substrates. The polypeptide is DNA-directed RNA polymerase subunit Rpo11 (Methanosarcina mazei (strain ATCC BAA-159 / DSM 3647 / Goe1 / Go1 / JCM 11833 / OCM 88) (Methanosarcina frisia)).